A 312-amino-acid chain; its full sequence is Methionyl-tRNA formyltransferase (312 aa).

Position 110 to 113 (110 to 113) interacts with (6S)-5,6,7,8-tetrahydrofolate; the sequence is SLLP.

Belongs to the Fmt family.

It carries out the reaction L-methionyl-tRNA(fMet) + (6R)-10-formyltetrahydrofolate = N-formyl-L-methionyl-tRNA(fMet) + (6S)-5,6,7,8-tetrahydrofolate + H(+). Its function is as follows. Attaches a formyl group to the free amino group of methionyl-tRNA(fMet). The formyl group appears to play a dual role in the initiator identity of N-formylmethionyl-tRNA by promoting its recognition by IF2 and preventing the misappropriation of this tRNA by the elongation apparatus. The sequence is that of Methionyl-tRNA formyltransferase from Mycobacterium marinum (strain ATCC BAA-535 / M).